Here is a 204-residue protein sequence, read N- to C-terminus: Urease accessory protein UreG (204 aa).

15–22 (GPVGSGKT) is a binding site for GTP.

Belongs to the SIMIBI class G3E GTPase family. UreG subfamily. Homodimer. UreD, UreF and UreG form a complex that acts as a GTP-hydrolysis-dependent molecular chaperone, activating the urease apoprotein by helping to assemble the nickel containing metallocenter of UreC. The UreE protein probably delivers the nickel.

The protein resides in the cytoplasm. Its function is as follows. Facilitates the functional incorporation of the urease nickel metallocenter. This process requires GTP hydrolysis, probably effectuated by UreG. The protein is Urease accessory protein UreG of Methylobacterium nodulans (strain LMG 21967 / CNCM I-2342 / ORS 2060).